The sequence spans 356 residues: Protein-arginine kinase (356 aa).

Residues 24–254 (IVLSSRIRLA…MQLIQQERAA (231 aa)) form the Phosphagen kinase C-terminal domain. ATP is bound by residues 27 to 31 (SSRIR), His91, Arg125, 176 to 180 (RASVM), and 207 to 212 (RGIYGE). The RDXXRA motif of the pArg binding pocket involved in allosteric regulation signature appears at 337–342 (RDERRA).

This sequence belongs to the ATP:guanido phosphotransferase family.

It catalyses the reaction L-arginyl-[protein] + ATP = N(omega)-phospho-L-arginyl-[protein] + ADP + H(+). Appears to be allosterically activated by the binding of pArg-containing polypeptides to the pArg-binding pocket localized in the C-terminal domain of McsB. Catalyzes the specific phosphorylation of arginine residues in a large number of proteins. Is part of the bacterial stress response system. Protein arginine phosphorylation has a physiologically important role and is involved in the regulation of many critical cellular processes, such as protein homeostasis, motility, competence, and stringent and stress responses, by regulating gene expression and protein activity. The polypeptide is Protein-arginine kinase (Halalkalibacterium halodurans (strain ATCC BAA-125 / DSM 18197 / FERM 7344 / JCM 9153 / C-125) (Bacillus halodurans)).